The chain runs to 191 residues: dTTP/UTP pyrophosphatase (191 aa).

The active-site Proton acceptor is the D75.

This sequence belongs to the Maf family. YhdE subfamily. A divalent metal cation serves as cofactor.

It is found in the cytoplasm. It carries out the reaction dTTP + H2O = dTMP + diphosphate + H(+). The enzyme catalyses UTP + H2O = UMP + diphosphate + H(+). In terms of biological role, nucleoside triphosphate pyrophosphatase that hydrolyzes dTTP and UTP. May have a dual role in cell division arrest and in preventing the incorporation of modified nucleotides into cellular nucleic acids. The chain is dTTP/UTP pyrophosphatase from Aliivibrio fischeri (strain ATCC 700601 / ES114) (Vibrio fischeri).